Reading from the N-terminus, the 191-residue chain is 3-hydroxyanthranilate 3,4-dioxygenase 2 (191 aa).

R48 is an O2 binding site. Fe cation contacts are provided by H52, E73, and H111. E73 provides a ligand contact to substrate. Residues R115 and E125 each contribute to the substrate site.

Belongs to the 3-HAO family. It depends on Fe(2+) as a cofactor.

The protein resides in the cytoplasm. It carries out the reaction 3-hydroxyanthranilate + O2 = (2Z,4Z)-2-amino-3-carboxymuconate 6-semialdehyde. It participates in cofactor biosynthesis; NAD(+) biosynthesis; quinolinate from L-kynurenine: step 3/3. Functionally, catalyzes the oxidative ring opening of 3-hydroxyanthranilate to 2-amino-3-carboxymuconate semialdehyde, which spontaneously cyclizes to quinolinate. The protein is 3-hydroxyanthranilate 3,4-dioxygenase 2 (bna1-2) of Aspergillus clavatus (strain ATCC 1007 / CBS 513.65 / DSM 816 / NCTC 3887 / NRRL 1 / QM 1276 / 107).